Reading from the N-terminus, the 402-residue chain is Tyrosine--tRNA ligase (402 aa).

A 'HIGH' region motif is present at residues 47 to 56 (PTAPDLHLGH). Positions 232 to 236 (KMSKS) match the 'KMSKS' region motif. Lys-235 contributes to the ATP binding site. Positions 341–401 (VGILDVLKQI…GKKRFMKLNI (61 aa)) constitute an S4 RNA-binding domain.

It belongs to the class-I aminoacyl-tRNA synthetase family. TyrS type 2 subfamily. Homodimer.

The protein localises to the cytoplasm. The catalysed reaction is tRNA(Tyr) + L-tyrosine + ATP = L-tyrosyl-tRNA(Tyr) + AMP + diphosphate + H(+). Functionally, catalyzes the attachment of tyrosine to tRNA(Tyr) in a two-step reaction: tyrosine is first activated by ATP to form Tyr-AMP and then transferred to the acceptor end of tRNA(Tyr). This is Tyrosine--tRNA ligase from Helicobacter pylori (strain ATCC 700392 / 26695) (Campylobacter pylori).